We begin with the raw amino-acid sequence, 296 residues long: ATP synthase gamma chain (296 aa).

Belongs to the ATPase gamma chain family. In terms of assembly, F-type ATPases have 2 components, CF(1) - the catalytic core - and CF(0) - the membrane proton channel. CF(1) has five subunits: alpha(3), beta(3), gamma(1), delta(1), epsilon(1). CF(0) has three main subunits: a, b and c.

Its subcellular location is the cell inner membrane. Produces ATP from ADP in the presence of a proton gradient across the membrane. The gamma chain is believed to be important in regulating ATPase activity and the flow of protons through the CF(0) complex. The polypeptide is ATP synthase gamma chain (Rhodopirellula baltica (strain DSM 10527 / NCIMB 13988 / SH1)).